The sequence spans 476 residues: Growth/differentiation factor 10 (476 aa).

A signal peptide spans 1–29; sequence MAPGPARISLGSQLLPMVPLLLLLRGAGC. Positions 30–366 are excised as a propeptide; it reads GHRGPSWSSL…EKTMQKARRR (337 aa). The segment at 39–63 is disordered; that stretch reads LPSAAAGLQGDRDSQQSPGDAAAAL. 3 N-linked (GlcNAc...) asparagine glycosylation sites follow: Asn-114, Asn-152, and Asn-277. The tract at residues 268-301 is disordered; sequence GDFEPGAAPNSSADPRVRRAAQVSKPLQDNELPG. Intrachain disulfides connect Cys-374/Cys-441, Cys-403/Cys-473, and Cys-407/Cys-475. The N-linked (GlcNAc...) asparagine glycan is linked to Asn-467.

This sequence belongs to the TGF-beta family. Homodimer or heterodimer. Can form a non-covalent complex of the mature region and the pro-region. Highly expressed in epididymal adipose tissue, brain, bone and aorta and to a lesser extent in liver and spleen. Expressed at higher levels in preadipocytes than in mature adipocytes. Strongly expressed in glial cells of the cerebellum.

It localises to the secreted. Growth factor involved in osteogenesis and adipogenesis. Plays an inhibitory role in the process of osteoblast differentiation via SMAD2/3 pathway. Plays an inhibitory role in the process of adipogenesis. In Mus musculus (Mouse), this protein is Growth/differentiation factor 10.